Here is a 282-residue protein sequence, read N- to C-terminus: Undecaprenyl-diphosphatase (282 aa).

The next 7 membrane-spanning stretches (helical) occupy residues 6 to 26 (LYFVKAFFLGIIEGLTEFIPV), 45 to 65 (SGKVFEVVIQLGAILAVMWIF), 85 to 105 (LFTRNLLLAFFPAAIIGAIFI), 112 to 132 (FYHPGVVAVTLVLGGLIMLWV), 200 to 220 (ATEFSFFLAMPTMLGAAVYDM), 230 to 250 (HDLGAIAVGFVAAFLSALLVV), and 262 to 282 (YRGFAWYRIALGVVVAAWLAF).

Belongs to the UppP family.

Its subcellular location is the cell inner membrane. It catalyses the reaction di-trans,octa-cis-undecaprenyl diphosphate + H2O = di-trans,octa-cis-undecaprenyl phosphate + phosphate + H(+). In terms of biological role, catalyzes the dephosphorylation of undecaprenyl diphosphate (UPP). Confers resistance to bacitracin. In Bordetella avium (strain 197N), this protein is Undecaprenyl-diphosphatase.